We begin with the raw amino-acid sequence, 116 residues long: Large ribosomal subunit protein bL19 (116 aa).

Belongs to the bacterial ribosomal protein bL19 family.

This protein is located at the 30S-50S ribosomal subunit interface and may play a role in the structure and function of the aminoacyl-tRNA binding site. The polypeptide is Large ribosomal subunit protein bL19 (Staphylococcus aureus (strain USA300)).